We begin with the raw amino-acid sequence, 127 residues long: Holo-[acyl-carrier-protein] synthase (127 aa).

The Mg(2+) site is built by Asp-8 and Glu-57.

It belongs to the P-Pant transferase superfamily. AcpS family. Mg(2+) is required as a cofactor.

It is found in the cytoplasm. The enzyme catalyses apo-[ACP] + CoA = holo-[ACP] + adenosine 3',5'-bisphosphate + H(+). Transfers the 4'-phosphopantetheine moiety from coenzyme A to a Ser of acyl-carrier-protein. The sequence is that of Holo-[acyl-carrier-protein] synthase from Ruthia magnifica subsp. Calyptogena magnifica.